The primary structure comprises 338 residues: Transcription factor AP-4 (338 aa).

The bHLH domain maps to 48-99; the sequence is IRREIANSNERRRMQSINAGFQSLKTLIPHTDGEKLSKAAILQQTAEYIFSL. The interval 100–120 is leucine-zipper 1; it reads EQEKTRLLQQNTQLKRFIQEL. Positions 118 to 141 are disordered; that stretch reads QELSGSSPKRRRAEDKDEGIGSPD. Phosphoserine occurs at positions 123, 124, and 139. A Glycyl lysine isopeptide (Lys-Gly) (interchain with G-Cter in SUMO2) cross-link involves residue Lys147. A leucine-zipper 2 region spans residues 151-179; it reads LRREMIELRQQLDKERSVRMMLEEQVRSL. Residues Lys187, Lys189, and Lys285 each participate in a glycyl lysine isopeptide (Lys-Gly) (interchain with G-Cter in SUMO2) cross-link. Residues 283–294 are compositionally biased toward basic and acidic residues; it reads QEKQELEEEQRR. Residues 283–338 form a disordered region; sequence QEKQELEEEQRRAVIVKPVRSCPEAPTSDTASDSEASDSDAMDQSREEPSGDGELP.

As to quaternary structure, efficient DNA binding requires dimerization with another bHLH protein. Homodimer.

It is found in the nucleus. Functionally, transcription factor that activates both viral and cellular genes by binding to the symmetrical DNA sequence 5'-CAGCTG-3'. The protein is Transcription factor AP-4 (TFAP4) of Homo sapiens (Human).